The primary structure comprises 153 residues: Actin-related protein 2/3 complex subunit 5-like protein (153 aa).

A Phosphoserine modification is found at S64.

The protein belongs to the ARPC5 family. May be a component of the Arp2/3 complex in which it may replace ARPC5.

The protein resides in the cytoplasm. Its subcellular location is the cytoskeleton. The protein localises to the cell projection. In terms of biological role, may function as component of the Arp2/3 complex which is involved in regulation of actin polymerization and together with an activating nucleation-promoting factor (NPF) mediates the formation of branched actin networks. The chain is Actin-related protein 2/3 complex subunit 5-like protein (ARPC5L) from Bos taurus (Bovine).